The sequence spans 559 residues: Glucose-6-phosphate isomerase 4 (559 aa).

Glu356 (proton donor) is an active-site residue. Active-site residues include His387 and Lys513.

This sequence belongs to the GPI family.

Its subcellular location is the cytoplasm. It catalyses the reaction alpha-D-glucose 6-phosphate = beta-D-fructose 6-phosphate. Its pathway is carbohydrate biosynthesis; gluconeogenesis. The protein operates within carbohydrate degradation; glycolysis; D-glyceraldehyde 3-phosphate and glycerone phosphate from D-glucose: step 2/4. Its function is as follows. Catalyzes the reversible isomerization of glucose-6-phosphate to fructose-6-phosphate. In Rhodococcus jostii (strain RHA1), this protein is Glucose-6-phosphate isomerase 4.